We begin with the raw amino-acid sequence, 470 residues long: MFTISGVVLITRPVYDEGSLNYCQSGAMNNGILLESVEGNKPRYSIGGAEPIGTINANAVLTAATYAEDVKFTDADPLNGTRVAICNGEDTQQEEMGFQGGALGYFAYDVGRRLEGYNDLGIEDWAIPDLAGSSYEIGVSADHQNDVIVLIAHASADGNDVFITSSRQLSMVAGPTCCASGDVEILRNKLHYYGVIPFSQDDCGFNRLKDYLGSGDMYQVNLGNRNVGAIVMTLFQGYNQLRLMNPGPYMVFLDEANIIMASPEIVLADEANDLNTRPIAGTLMRLNEQDEDGVNAACLGQHHKDRAEHMMIVDLVRNDLGRVGRFGSVNVQEIVGAENYSVVMHIVSRVTGSLNEAFEAMEIIRAGFPGGSITGAPKVRAMEIIEELEPQRRDGWGGSIGYIAYRGNIGYRIAIRTLFACNGQLFASSGAGLVGDSMEDGEYNETFEKMRALRSFFCAAVHMGKTPYLS.

The protein belongs to the anthranilate synthase component I family. As to quaternary structure, monomer. Heterodimer consisting of two non-identical subunits: a glutamine amidotransferase subunit (PabA) and a aminodeoxychorismate synthase subunit (PabB). Mg(2+) serves as cofactor.

It catalyses the reaction chorismate + L-glutamine = 4-amino-4-deoxychorismate + L-glutamate. The protein operates within cofactor biosynthesis; tetrahydrofolate biosynthesis; 4-aminobenzoate from chorismate: step 1/2. In terms of biological role, part of a heterodimeric complex that catalyzes the two-step biosynthesis of 4-amino-4-deoxychorismate (ADC), a precursor of p-aminobenzoate (PABA) and tetrahydrofolate. In the first step, a glutamine amidotransferase (PabA) generates ammonia as a substrate that, along with chorismate, is used in the second step, catalyzed by aminodeoxychorismate synthase (PabB) to produce ADC. The sequence is that of Aminodeoxychorismate synthase component 1 (pabB) from Lactococcus lactis subsp. lactis (Streptococcus lactis).